The chain runs to 372 residues: N-methyl-L-tryptophan oxidase (372 aa).

FAD is bound at residue Asp-4–His-34. At Cys-307 the chain carries S-8alpha-FAD cysteine.

Belongs to the MSOX/MTOX family. MTOX subfamily. In terms of assembly, monomer. FAD serves as cofactor.

The catalysed reaction is N(alpha)-methyl-L-tryptophan + O2 + H2O = L-tryptophan + formaldehyde + H2O2. Catalyzes the oxidative demethylation of N-methyl-L-tryptophan. The chain is N-methyl-L-tryptophan oxidase from Salmonella typhimurium (strain LT2 / SGSC1412 / ATCC 700720).